Consider the following 229-residue polypeptide: Enolase-phosphatase E1 (229 aa).

Residues 207-229 (RDPASHHPQVQRFDDIHPEQIPA) form a disordered region. A compositionally biased stretch (basic and acidic residues) spans 218–229 (RFDDIHPEQIPA).

This sequence belongs to the HAD-like hydrolase superfamily. MasA/MtnC family. In terms of assembly, monomer. Requires Mg(2+) as cofactor.

The enzyme catalyses 5-methylsulfanyl-2,3-dioxopentyl phosphate + H2O = 1,2-dihydroxy-5-(methylsulfanyl)pent-1-en-3-one + phosphate. It participates in amino-acid biosynthesis; L-methionine biosynthesis via salvage pathway; L-methionine from S-methyl-5-thio-alpha-D-ribose 1-phosphate: step 3/6. Its pathway is amino-acid biosynthesis; L-methionine biosynthesis via salvage pathway; L-methionine from S-methyl-5-thio-alpha-D-ribose 1-phosphate: step 4/6. Bifunctional enzyme that catalyzes the enolization of 2,3-diketo-5-methylthiopentyl-1-phosphate (DK-MTP-1-P) into the intermediate 2-hydroxy-3-keto-5-methylthiopentenyl-1-phosphate (HK-MTPenyl-1-P), which is then dephosphorylated to form the acireductone 1,2-dihydroxy-3-keto-5-methylthiopentene (DHK-MTPene). The sequence is that of Enolase-phosphatase E1 from Klebsiella pneumoniae subsp. pneumoniae (strain ATCC 700721 / MGH 78578).